Consider the following 293-residue polypeptide: tRNA pseudouridine synthase B (293 aa).

The Nucleophile role is filled by aspartate 39.

This sequence belongs to the pseudouridine synthase TruB family. Type 1 subfamily.

The enzyme catalyses uridine(55) in tRNA = pseudouridine(55) in tRNA. Responsible for synthesis of pseudouridine from uracil-55 in the psi GC loop of transfer RNAs. In Rickettsia bellii (strain RML369-C), this protein is tRNA pseudouridine synthase B.